We begin with the raw amino-acid sequence, 139 residues long: Nuclear transcription factor Y subunit B-4 (139 aa).

Residues 8–14 (LPIANVG) mediate DNA binding. Positions 35–46 (VQECATEFISFV) are subunit association domain (SAD). The span at 90–115 (YREAERERTEHNKGSNDSGNEKETNT) shows a compositional bias: basic and acidic residues. The interval 90 to 139 (YREAERERTEHNKGSNDSGNEKETNTRSDVQNQSTKFIRVVEKGSSSSAR) is disordered. A compositionally biased stretch (polar residues) spans 116–125 (RSDVQNQSTK).

It belongs to the NFYB/HAP3 subunit family. As to quaternary structure, heterotrimeric transcription factor composed of three components, NF-YA, NF-YB and NF-YC. NF-YB and NF-YC must interact and dimerize for NF-YA association and DNA binding. Expressed in flowers, siliques and young rosettes.

Its subcellular location is the nucleus. In terms of biological role, component of the NF-Y/HAP transcription factor complex. The NF-Y complex stimulates the transcription of various genes by recognizing and binding to a CCAAT motif in promoters. The polypeptide is Nuclear transcription factor Y subunit B-4 (NFYB4) (Arabidopsis thaliana (Mouse-ear cress)).